The primary structure comprises 806 residues: Lon protease (806 aa).

The Lon N-terminal domain occupies 14–207; that stretch reads YPVLPLRDIV…KALGFMEGEI (194 aa). Residue 359-366 participates in ATP binding; it reads GPPGVGKT. The region spanning 594-775 is the Lon proteolytic domain; that stretch reads DDQVGVVTGL…GEVIAHALLR (182 aa). Active-site residues include Ser-681 and Lys-724. The disordered stretch occupies residues 786–806; sequence SQPAALPSVDSQDEAGTSIAH.

This sequence belongs to the peptidase S16 family. As to quaternary structure, homohexamer. Organized in a ring with a central cavity.

It is found in the cytoplasm. The enzyme catalyses Hydrolysis of proteins in presence of ATP.. Its function is as follows. ATP-dependent serine protease that mediates the selective degradation of mutant and abnormal proteins as well as certain short-lived regulatory proteins. Required for cellular homeostasis and for survival from DNA damage and developmental changes induced by stress. Degrades polypeptides processively to yield small peptide fragments that are 5 to 10 amino acids long. Binds to DNA in a double-stranded, site-specific manner. In R.meliloti it is important for controlling the turnover of a constitutively expressed protein(s) that, when unregulated, disrupts normal nodule formation and normal growth. The chain is Lon protease from Rhizobium meliloti (strain 1021) (Ensifer meliloti).